A 439-amino-acid chain; its full sequence is Innexin-19 (439 aa).

A run of 4 helical transmembrane segments spans residues 33 to 53, 103 to 123, 199 to 219, and 285 to 305; these read PLIL…GTPI, QWVP…CIFW, IVYS…FFIL, and VFAF…CSFI.

Belongs to the pannexin family.

Its subcellular location is the cell membrane. The protein resides in the cell junction. The protein localises to the gap junction. Its function is as follows. Structural component of the gap junctions that specifically coordinates left-right asymmetry in the developing nervous system. Acts by forming gap junction network linking embryonic neurons and providing electrical coupling between cells, leading to promote or inhibit AWC signaling. The polypeptide is Innexin-19 (inx-19) (Caenorhabditis briggsae).